A 429-amino-acid polypeptide reads, in one-letter code: Mannose-6-phosphate isomerase (429 aa).

Ser2 carries the post-translational modification N-acetylserine. Ser107 carries the phosphoserine modification. Residues Gln109, His111, Glu136, and His281 each contribute to the Zn(2+) site. Arg300 is an active-site residue.

This sequence belongs to the mannose-6-phosphate isomerase type 1 family. Monomer. The cofactor is Zn(2+).

Its subcellular location is the cytoplasm. It carries out the reaction D-mannose 6-phosphate = D-fructose 6-phosphate. It functions in the pathway nucleotide-sugar biosynthesis; GDP-alpha-D-mannose biosynthesis; alpha-D-mannose 1-phosphate from D-fructose 6-phosphate: step 1/2. Its activity is regulated as follows. Can be inhibited by an excess of zinc. Functionally, involved in the synthesis of the GDP-mannose and dolichol-phosphate-mannose required for a number of critical mannosyl transfer reactions. The protein is Mannose-6-phosphate isomerase (PMI40) of Saccharomyces cerevisiae (strain ATCC 204508 / S288c) (Baker's yeast).